The primary structure comprises 362 residues: Homeobox-leucine zipper protein HOX11 (362 aa).

Basic and acidic residues predominate over residues 27 to 45 (REEAAEAGRRDHEVRRELE). The disordered stretch occupies residues 27-179 (REEAAEAGRR…DDGGSARKKL (153 aa)). Residues 64 to 75 (LTLLPMVPGLGL) show a composition bias toward low complexity. Over residues 126–135 (LSSSPNNSAG) the composition is skewed to polar residues. A compositionally biased stretch (gly residues) spans 145–160 (HGLGGNDAAPGGGGGD). A DNA-binding region (homeobox) is located at residues 174–233 (SARKKLRLSKEQSAFLEESFKEHSTLNPKQKLALAKQLNLRPRQVEVWFQNRRARTKLKQ). The interval 232-276 (KQTEVDCEYLKRCCETLTEENRRLQKELAELRALKTVHPFYMHLP) is leucine-zipper. Residues 301–330 (AATSSTAAPPAAPSSGGIAATSSSAAAAAA) are disordered.

It belongs to the HD-ZIP homeobox family. Class II subfamily. In terms of tissue distribution, expressed in stems, leaf sheaths and blades and panicles.

The protein localises to the nucleus. Its function is as follows. Probable transcription factor. This is Homeobox-leucine zipper protein HOX11 (HOX11) from Oryza sativa subsp. japonica (Rice).